The sequence spans 50 residues: U23-theraphotoxin-Cg1a 2 (50 aa).

Cystine bridges form between cysteine 22–cysteine 36, cysteine 29–cysteine 41, and cysteine 35–cysteine 47.

It belongs to the neurotoxin 10 (Hwtx-1) family. 64 (Jztx-20) subfamily. As to expression, expressed by the venom gland.

The protein localises to the secreted. Its function is as follows. Probable ion channel inhibitor. The chain is U23-theraphotoxin-Cg1a 2 from Chilobrachys guangxiensis (Chinese earth tiger tarantula).